The primary structure comprises 251 residues: Pyrroloquinoline-quinone synthase (251 aa).

This sequence belongs to the PqqC family.

It catalyses the reaction 6-(2-amino-2-carboxyethyl)-7,8-dioxo-1,2,3,4,7,8-hexahydroquinoline-2,4-dicarboxylate + 3 O2 = pyrroloquinoline quinone + 2 H2O2 + 2 H2O + H(+). The protein operates within cofactor biosynthesis; pyrroloquinoline quinone biosynthesis. Its function is as follows. Ring cyclization and eight-electron oxidation of 3a-(2-amino-2-carboxyethyl)-4,5-dioxo-4,5,6,7,8,9-hexahydroquinoline-7,9-dicarboxylic-acid to PQQ. This is Pyrroloquinoline-quinone synthase from Pseudomonas syringae pv. syringae (strain B728a).